The primary structure comprises 285 residues: Probable E3 ubiquitin-protein ligase IE1 (285 aa).

Residues 1–201 (MASKDSDVRC…LPGYWDRDDR (201 aa)) are Cytoplasmic-facing. The segment at 124-183 (SIDEEGKQCWICRDGESLPEARYCNCYGDLQYCHEECLKTWISMSGEKKCKFCQTPYKVN) adopts an RING-CH-type zinc-finger fold. Zn(2+) contacts are provided by C132, C135, C147, C149, H157, C160, C173, and C176. The chain crosses the membrane as a helical span at residues 202-222 (FVFIAGFIGMGTILAGWIASF). Residues 223-238 (FYLLVVLCGKYFTYKD) are Extracellular-facing. A helical transmembrane segment spans residues 239–259 (VMIVVGGLAIIQVVGLMFSLF). Residues 260 to 285 (MYFQIGNLLRQYINYMTETNIDPLRT) are Cytoplasmic-facing.

Its subcellular location is the membrane. It carries out the reaction S-ubiquitinyl-[E2 ubiquitin-conjugating enzyme]-L-cysteine + [acceptor protein]-L-lysine = [E2 ubiquitin-conjugating enzyme]-L-cysteine + N(6)-ubiquitinyl-[acceptor protein]-L-lysine.. It functions in the pathway protein modification; protein ubiquitination. In terms of biological role, controls the expression of later classes of genes and also of the IE genes (Potential). E3 ubiquitin-protein ligase. E3 ubiquitin ligases accept ubiquitin from an E2 ubiquitin-conjugating enzyme in the form of a thioester and then directly transfer the ubiquitin to targeted substrates. The polypeptide is Probable E3 ubiquitin-protein ligase IE1 (IE1) (Bovine herpesvirus 4 (strain DN-599) (BoHV-4)).